A 1733-amino-acid polypeptide reads, in one-letter code: Probable nuclear antigen (1733 aa).

Disordered regions lie at residues methionine 1–threonine 41, proline 71–valine 394, alanine 437–glutamine 506, alanine 520–alanine 548, leucine 882–leucine 907, alanine 993–alanine 1141, proline 1223–alanine 1242, glycine 1348–glycine 1475, serine 1585–glycine 1608, and proline 1630–cysteine 1665. Residues aspartate 21–proline 31 show a composition bias toward basic residues. Basic and acidic residues predominate over residues proline 77–proline 97. Positions threonine 113 to proline 131 are enriched in low complexity. Residues leucine 135–arginine 147 show a composition bias toward basic and acidic residues. Residues glycine 179–proline 189 are compositionally biased toward pro residues. Residues serine 190–proline 201 are compositionally biased toward low complexity. The segment covering serine 202–proline 220 has biased composition (pro residues). A compositionally biased stretch (polar residues) spans arginine 227–histidine 240. Positions proline 272–alanine 299 are enriched in pro residues. Residues glycine 316–arginine 326 show a composition bias toward basic residues. Residues aspartate 336–alanine 354 show a composition bias toward acidic residues. Basic and acidic residues predominate over residues glutamate 355–glutamate 364. 3 stretches are compositionally biased toward gly residues: residues glycine 365–glycine 374, glycine 454–glycine 466, and glycine 479–valine 494. The span at glycine 495 to glutamine 506 shows a compositional bias: low complexity. Positions leucine 882–arginine 892 are enriched in gly residues. Low complexity predominate over residues glycine 893 to leucine 907. 2 stretches are compositionally biased toward gly residues: residues alanine 993 to glycine 1004 and alanine 1027 to proline 1043. Composition is skewed to basic and acidic residues over residues glycine 1078–arginine 1087 and arginine 1100–leucine 1112. Positions glycine 1116–glycine 1127 are enriched in gly residues. Over residues glycine 1385–glycine 1407 the composition is skewed to gly residues. Basic residues-rich tracts occupy residues proline 1408–arginine 1420 and arginine 1444–arginine 1453. Residues glycine 1454–alanine 1474 are compositionally biased toward gly residues. The segment covering arginine 1652–cysteine 1665 has biased composition (gly residues).

The protein is Probable nuclear antigen of Sus scrofa (Pig).